Consider the following 481-residue polypeptide: uncharacterized protein (481 aa).

Helical transmembrane passes span 30-50, 96-116, 154-174, 196-216, 220-240, 250-270, 311-331, 354-374, 391-411, and 424-444; these read TIII…FVQF, AIAL…FIGM, CMAV…FNSV, ISLV…IAII, LVPM…GMHI, IVQS…ALVS, MLGV…IILL, IGEF…YSSI, KPWL…FGAV, and VMAV…PIVW.

It belongs to the alanine or glycine:cation symporter (AGCS) (TC 2.A.25) family.

The protein resides in the cell inner membrane. This is an uncharacterized protein from Haemophilus influenzae (strain ATCC 51907 / DSM 11121 / KW20 / Rd).